Reading from the N-terminus, the 210-residue chain is Protein-L-isoaspartate O-methyltransferase (210 aa).

Serine 60 is an active-site residue.

It belongs to the methyltransferase superfamily. L-isoaspartyl/D-aspartyl protein methyltransferase family.

Its subcellular location is the cytoplasm. It catalyses the reaction [protein]-L-isoaspartate + S-adenosyl-L-methionine = [protein]-L-isoaspartate alpha-methyl ester + S-adenosyl-L-homocysteine. Functionally, catalyzes the methyl esterification of L-isoaspartyl residues in peptides and proteins that result from spontaneous decomposition of normal L-aspartyl and L-asparaginyl residues. It plays a role in the repair and/or degradation of damaged proteins. The polypeptide is Protein-L-isoaspartate O-methyltransferase (Xylella fastidiosa (strain M12)).